Consider the following 162-residue polypeptide: Cyanate hydratase (162 aa).

Catalysis depends on residues R103, E106, and S129.

It belongs to the cyanase family.

The enzyme catalyses cyanate + hydrogencarbonate + 3 H(+) = NH4(+) + 2 CO2. Its function is as follows. Catalyzes the reaction of cyanate with bicarbonate to produce ammonia and carbon dioxide. The chain is Cyanate hydratase from Pyrenophora tritici-repentis (strain Pt-1C-BFP) (Wheat tan spot fungus).